Consider the following 291-residue polypeptide: Methionine aminopeptidase (291 aa).

A substrate-binding site is contributed by His-118. Residues Asp-135, Asp-146, and His-209 each contribute to the a divalent metal cation site. Position 216 (His-216) interacts with substrate. The a divalent metal cation site is built by Glu-241 and Glu-273.

Belongs to the peptidase M24A family. Methionine aminopeptidase type 1 subfamily. As to quaternary structure, monomer. Requires Co(2+) as cofactor. It depends on Zn(2+) as a cofactor. Mn(2+) serves as cofactor. The cofactor is Fe(2+).

The catalysed reaction is Release of N-terminal amino acids, preferentially methionine, from peptides and arylamides.. Its function is as follows. Removes the N-terminal methionine from nascent proteins. The N-terminal methionine is often cleaved when the second residue in the primary sequence is small and uncharged (Met-Ala-, Cys, Gly, Pro, Ser, Thr, or Val). Requires deformylation of the N(alpha)-formylated initiator methionine before it can be hydrolyzed. This Chlamydia trachomatis serovar D (strain ATCC VR-885 / DSM 19411 / UW-3/Cx) protein is Methionine aminopeptidase.